The primary structure comprises 105 residues: MELTRVILHPYTTEKTYSIRNKSEHETLTFIVDKNANKYQIREAFIAIFGLKPLKIRTTNRGPAKIRTSTARPGYTKAKKIAYIVMPIGVKVAVSKEEVEAANAK.

It belongs to the universal ribosomal protein uL23 family. Part of the 50S ribosomal subunit. Contacts protein L29, and trigger factor when it is bound to the ribosome.

Its function is as follows. One of the early assembly proteins it binds 23S rRNA. One of the proteins that surrounds the polypeptide exit tunnel on the outside of the ribosome. Forms the main docking site for trigger factor binding to the ribosome. The sequence is that of Large ribosomal subunit protein uL23 from Ureaplasma urealyticum serovar 10 (strain ATCC 33699 / Western).